A 174-amino-acid polypeptide reads, in one-letter code: Superoxide dismutase [Cu-Zn] (174 aa).

The signal sequence occupies residues Met-1–Ala-20. Positions 68, 70, and 93 each coordinate Cu cation. An intrachain disulfide couples Cys-75 to Cys-170. Zn(2+) is bound by residues His-93, His-102, His-110, and Asp-113. His-148 contributes to the Cu cation binding site.

The protein belongs to the Cu-Zn superoxide dismutase family. In terms of assembly, homodimer. Requires Cu cation as cofactor. Zn(2+) serves as cofactor.

The protein resides in the periplasm. The catalysed reaction is 2 superoxide + 2 H(+) = H2O2 + O2. In terms of biological role, destroys radicals which are normally produced within the cells and which are toxic to biological systems. The sequence is that of Superoxide dismutase [Cu-Zn] (sodC) from Brucella melitensis biotype 1 (strain ATCC 23456 / CCUG 17765 / NCTC 10094 / 16M).